The chain runs to 46 residues: Esculentin-1 (46 aa).

A disulfide bridge links Cys40 with Cys46.

As to expression, expressed by the skin glands.

The protein resides in the secreted. Antimicrobial peptide. Stimulates insulin release by BRIN-BD11 cells in vitro. This is Esculentin-1 from Pelophylax saharicus (Sahara frog).